The sequence spans 957 residues: Calsyntenin-3 (957 aa).

Positions 1–19 are cleaved as a signal peptide; it reads MTPLLFPLLLASLLPSSSC. Residues 20-848 are Extracellular-facing; that stretch reads NKANKHKPWI…SHRNSMVPSA (829 aa). Cadherin domains lie at 29–145 and 146–246; these read IEAE…APVF and VERL…KPSW. Asn-299, Asn-347, and Asn-508 each carry an N-linked (GlcNAc...) asparagine glycan. Residues 849–869 traverse the membrane as a helical segment; it reads ATLIIVVCVGFLVLMVVLGLV. Residues 870 to 957 lie on the Cytoplasmic side of the membrane; the sequence is RIHSLHRRVS…RIIETPPHRY (88 aa). The interval 919–957 is disordered; that stretch reads CVAGAAGGQQDDEDSSDSEAADSPSSDERRIIETPPHRY. The segment covering 928 to 938 has biased composition (acidic residues); that stretch reads QDDEDSSDSEA. Residues 944–957 show a composition bias toward basic and acidic residues; the sequence is SDERRIIETPPHRY.

Belongs to the calsyntenin family. Interacts (via cadherin domains) with both alpha and beta isoforms of neurexins (NRXN1, NRXN2 and NRXN3). Directly interacts with APBA2. Forms a tripartite complex with APBA2 and APP. Interacts with low affinity with KLC1. Interacts with SLC23A2/SVCT2. Proteolytically processed under normal cellular conditions. A primary zeta-cleavage generates a large extracellular (soluble) N-terminal domain (sAlc) and a short C-terminal transmembrane fragment (CTF1). A secondary cleavage catalyzed by gamma-secretase within the transmembrane domain releases the beta-Alc-beta chain in the extracellular milieu and produces an intracellular fragment (AlcICD). This processing is strongly suppressed in the tripartite complex formed with APBA2 and APP, which seems to prevent the association with gamma-secretase.

It is found in the postsynaptic cell membrane. It localises to the endoplasmic reticulum membrane. The protein resides in the golgi apparatus membrane. The protein localises to the cell projection. Its subcellular location is the dendrite. Its function is as follows. Postsynaptic adhesion molecule that binds to presynaptic neurexins to mediate both excitatory and inhibitory synapse formation. Promotes synapse development by acting as a cell adhesion molecule at the postsynaptic membrane, which associates with both neurexin-alpha and neurexin-beta proteins at the presynaptic membrane. Regulates the balance between excitatory and inhibitory synapses by inhibiting formation of excitatory parallel-fiber synapses and promoting formation of inhibitory synapses in the same neuron. May also be involved in ascorbate (vitamin C) uptake via its interaction with SLC23A2/SVCT2. Complex formation with APBA2 and APP, stabilizes APP metabolism and enhances APBA2-mediated suppression of beta-APP40 secretion, due to the retardation of intracellular APP maturation. This Bos taurus (Bovine) protein is Calsyntenin-3 (CLSTN3).